Reading from the N-terminus, the 114-residue chain is Flagellar hook-basal body complex protein FliE (114 aa).

Belongs to the FliE family.

It localises to the bacterial flagellum basal body. The chain is Flagellar hook-basal body complex protein FliE from Burkholderia cenocepacia (strain ATCC BAA-245 / DSM 16553 / LMG 16656 / NCTC 13227 / J2315 / CF5610) (Burkholderia cepacia (strain J2315)).